The chain runs to 973 residues: UvrABC system protein A (973 aa).

34-41 contributes to the ATP binding site; it reads GLSGSGKS. ABC transporter domains are found at residues 331–609 and 629–958; these read WAKS…PKSL and PKKK…QFLK. An ATP-binding site is contributed by 662 to 669; that stretch reads GVSGGGKS. The segment at 761-787 adopts a C4-type zinc-finger fold; sequence CEACQGDGVIKIEMHFLPDVYVTCDVC.

The protein belongs to the ABC transporter superfamily. UvrA family. Forms a heterotetramer with UvrB during the search for lesions.

Its subcellular location is the cytoplasm. Its function is as follows. The UvrABC repair system catalyzes the recognition and processing of DNA lesions. UvrA is an ATPase and a DNA-binding protein. A damage recognition complex composed of 2 UvrA and 2 UvrB subunits scans DNA for abnormalities. When the presence of a lesion has been verified by UvrB, the UvrA molecules dissociate. This Rhizobium meliloti (strain 1021) (Ensifer meliloti) protein is UvrABC system protein A.